The following is a 251-amino-acid chain: Capsid protein (251 aa).

A Bipartite nuclear localization signal motif is present at residues 3–20 (KRDAPWRLTAGTAKISRT). The Nuclear localization signal motif lies at 35-49 (RASAWVNRPMYRKPR). Residues 63 to 80 (CEGPCKVQSFEQRHDVSH) fold into a zinc finger. Positions 96–117 (ITHRVGKRFCVKSVYILGKIWM) match the Nuclear export signal motif. The Bipartite nuclear localization signal motif lies at 195–242 (RRFWKVNNHVVYNHQEAGKYENHTENALLLYMACTHASNPVYATLKIR).

This sequence belongs to the geminiviridae capsid protein family. In terms of assembly, homomultimer. Binds to single-stranded and double-stranded viral DNA. Interacts (via nuclear localization signals) with host importin alpha-1a.

Its subcellular location is the virion. The protein localises to the host nucleus. In terms of biological role, encapsidates the viral DNA into characteristic twinned ('geminate') particles. Binds the genomic viral ssDNA and shuttles it into and out of the cell nucleus. The CP of bipartite geminiviruses is not required for cell-to-cell or systemic movement. This Capsicum annuum (Capsicum pepper) protein is Capsid protein.